Here is a 96-residue protein sequence, read N- to C-terminus: Co-chaperonin GroES (96 aa).

It belongs to the GroES chaperonin family. Heptamer of 7 subunits arranged in a ring. Interacts with the chaperonin GroEL.

The protein resides in the cytoplasm. Functionally, together with the chaperonin GroEL, plays an essential role in assisting protein folding. The GroEL-GroES system forms a nano-cage that allows encapsulation of the non-native substrate proteins and provides a physical environment optimized to promote and accelerate protein folding. GroES binds to the apical surface of the GroEL ring, thereby capping the opening of the GroEL channel. This is Co-chaperonin GroES from Aggregatibacter actinomycetemcomitans (Actinobacillus actinomycetemcomitans).